Here is a 739-residue protein sequence, read N- to C-terminus: Adenosylcobalamin-dependent ribonucleoside-triphosphate reductase (739 aa).

Cysteines 119 and 419 form a disulfide. An effector region-1 region spans residues 147 to 158 (SMPFSFLFDELM). Positions 168-313 (ARSNISQIPR…ICNLIGKAVV (146 aa)) are effector region-2. Catalysis depends on residues Cys408 and Glu410. Residues 565 to 626 (FHYGAYLIQR…NPNFASAGTV (62 aa)) form an adenosylcobalamin-binding-1 region. The segment at 685–724 (LQQAPKEPIDKETYEKRSQEITGNVEEVFSQLNSDVKDLE) is adenosylcobalamin-binding-2.

This sequence belongs to the class II ribonucleoside-triphosphate reductase family. Monomer. Adenosylcob(III)alamin is required as a cofactor.

The enzyme catalyses a 2'-deoxyribonucleoside 5'-triphosphate + [thioredoxin]-disulfide + H2O = a ribonucleoside 5'-triphosphate + [thioredoxin]-dithiol. With respect to regulation, allosterically regulated by ATP and dNTP. The polypeptide is Adenosylcobalamin-dependent ribonucleoside-triphosphate reductase (rtpR) (Lactobacillus delbrueckii subsp. bulgaricus (strain ATCC BAA-365 / Lb-18)).